The chain runs to 146 residues: MDKLEMHHLIMAAKARKGLSWDDLANAVGKAPVWLASVCYGMNSAPLEVATHLCEVLELDDQVAATLTAFPVKGWDKSIPQDPLIYRLYEVVGVYGPPLKDVIQEKFGDGIMSAIDFSMHVERIEDPKGDRVLLTLNGKFLPYRSW.

Active-site residues include Arg87, Glu90, and Ser113.

It belongs to the cyanase family.

It catalyses the reaction cyanate + hydrogencarbonate + 3 H(+) = NH4(+) + 2 CO2. Its function is as follows. Catalyzes the reaction of cyanate with bicarbonate to produce ammonia and carbon dioxide. In Pseudomonas putida (strain ATCC 700007 / DSM 6899 / JCM 31910 / BCRC 17059 / LMG 24140 / F1), this protein is Cyanate hydratase.